The sequence spans 249 residues: tRNA pseudouridine synthase A (249 aa).

D53 functions as the Nucleophile in the catalytic mechanism. Y111 is a binding site for substrate.

This sequence belongs to the tRNA pseudouridine synthase TruA family. As to quaternary structure, homodimer.

The catalysed reaction is uridine(38/39/40) in tRNA = pseudouridine(38/39/40) in tRNA. In terms of biological role, formation of pseudouridine at positions 38, 39 and 40 in the anticodon stem and loop of transfer RNAs. The protein is tRNA pseudouridine synthase A of Streptococcus suis (strain 05ZYH33).